Here is a 455-residue protein sequence, read N- to C-terminus: Golgi pH regulator (455 aa).

2 helical membrane passes run 5–25 and 46–66; these read IDSS…WLFF and VTFA…LGVL. N-linked (GlcNAc...) asparagine glycosylation occurs at asparagine 67. Transmembrane regions (helical) follow at residues 79 to 99, 111 to 131, and 150 to 170; these read LCVI…YFVV, LFAC…GDPF, and VGVI…VNCP. N-linked (GlcNAc...) asparagine glycosylation is found at asparagine 180 and asparagine 243. 4 helical membrane-spanning segments follow: residues 290–310, 343–363, 378–398, and 425–445; these read GYFF…NIVF, ISFI…LITL, VIVL…VLLI, and WFDV…YLAH.

The protein belongs to the Golgi pH regulator (TC 1.A.38) family. In terms of assembly, homotrimer.

The protein localises to the golgi apparatus membrane. The catalysed reaction is iodide(out) = iodide(in). It catalyses the reaction chloride(in) = chloride(out). The enzyme catalyses bromide(in) = bromide(out). It carries out the reaction fluoride(in) = fluoride(out). Voltage-gated channel that enables the transfer of anions such as iodide, chloride, bromide and fluoride which may function in counter-ion conductance and participates in Golgi acidification. This Gallus gallus (Chicken) protein is Golgi pH regulator.